A 276-amino-acid polypeptide reads, in one-letter code: Formamidopyrimidine-DNA glycosylase (276 aa).

Catalysis depends on Pro-2, which acts as the Schiff-base intermediate with DNA. The active-site Proton donor is the Glu-3. Lys-58 serves as the catalytic Proton donor; for beta-elimination activity. His-92, Arg-111, and Lys-154 together coordinate DNA. Residues 239–273 (QVYGHVGEECPRCGNIFEKIKVSGRGTTFCPHCQV) form an FPG-type zinc finger. Arg-263 functions as the Proton donor; for delta-elimination activity in the catalytic mechanism.

It belongs to the FPG family. As to quaternary structure, monomer. It depends on Zn(2+) as a cofactor.

The catalysed reaction is Hydrolysis of DNA containing ring-opened 7-methylguanine residues, releasing 2,6-diamino-4-hydroxy-5-(N-methyl)formamidopyrimidine.. It catalyses the reaction 2'-deoxyribonucleotide-(2'-deoxyribose 5'-phosphate)-2'-deoxyribonucleotide-DNA = a 3'-end 2'-deoxyribonucleotide-(2,3-dehydro-2,3-deoxyribose 5'-phosphate)-DNA + a 5'-end 5'-phospho-2'-deoxyribonucleoside-DNA + H(+). Functionally, involved in base excision repair of DNA damaged by oxidation or by mutagenic agents. Acts as a DNA glycosylase that recognizes and removes damaged bases. Has a preference for oxidized purines, such as 7,8-dihydro-8-oxoguanine (8-oxoG). Has AP (apurinic/apyrimidinic) lyase activity and introduces nicks in the DNA strand. Cleaves the DNA backbone by beta-delta elimination to generate a single-strand break at the site of the removed base with both 3'- and 5'-phosphates. This Lactobacillus acidophilus (strain ATCC 700396 / NCK56 / N2 / NCFM) protein is Formamidopyrimidine-DNA glycosylase.